Consider the following 721-residue polypeptide: Polyribonucleotide nucleotidyltransferase (721 aa).

The Mg(2+) site is built by aspartate 495 and aspartate 501. The KH domain occupies 562–621; sequence PRLLSFRIDPELIGTVIGPGGRTIKGITERTNTKIDIEDSGIVTIASHDGAAADEAQKII. The region spanning 631 to 699 is the S1 motif domain; it reads GEVFSGSITR…NRGRINLTLR (69 aa). The segment at 698–721 is disordered; that stretch reads LRGVPQSGDGAGEEPQPTPVAPLS.

Belongs to the polyribonucleotide nucleotidyltransferase family. Mg(2+) serves as cofactor.

The protein localises to the cytoplasm. The catalysed reaction is RNA(n+1) + phosphate = RNA(n) + a ribonucleoside 5'-diphosphate. Involved in mRNA degradation. Catalyzes the phosphorolysis of single-stranded polyribonucleotides processively in the 3'- to 5'-direction. The chain is Polyribonucleotide nucleotidyltransferase from Parasynechococcus marenigrum (strain WH8102).